The sequence spans 728 residues: Nucleolar GTP-binding protein 2 (728 aa).

At Met-1 the chain carries N-acetylmethionine. Residues 1–33 (MVKPKYKGRSTINRSAASTNPDRVQGAGGQNMR) are disordered. Residues 10–22 (STINRSAASTNPD) show a composition bias toward polar residues. The CP-type G domain maps to 207–368 (WGELYKVIDS…LIDCPGVVYP (162 aa)). GTP-binding positions include 317 to 324 (GYPNVGKS) and 361 to 365 (DCPGV). 3 disordered regions span residues 462–521 (PPNA…RNSE), 538–595 (VGPQ…DTKA), and 636–728 (YKEE…RQKQ). Over residues 480 to 489 (EVPTETTQNN) the composition is skewed to low complexity. Positions 498–520 (EVERSDSITEKEPEGDCSQDRNS) are enriched in basic and acidic residues. Ser-504 is modified (phosphoserine). Residues 553–586 (SDLEDLESSGEEEEQEQEQPGEDAEEERSPDTQE) are compositionally biased toward acidic residues. Positions 718 to 728 (KHRRNKFRQKQ) are enriched in basic residues.

Belongs to the TRAFAC class YlqF/YawG GTPase family. NOG2 subfamily. In terms of assembly, interacts with LYAR and RPL23A. Interacts with the nuclear importin-beta receptor and, at a lower extent, with importin-alpha.

The protein resides in the nucleus. The protein localises to the nucleolus. In terms of biological role, GTPase that associates with pre-60S ribosomal subunits in the nucleolus and is required for their nuclear export and maturation. May promote cell proliferation possibly by increasing p53/TP53 protein levels, and consequently those of its downstream product CDKN1A/p21, and decreasing RPL23A protein levels. In Mus musculus (Mouse), this protein is Nucleolar GTP-binding protein 2 (Gnl2).